The following is a 142-amino-acid chain: Transcription antitermination protein NusB (142 aa).

The protein belongs to the NusB family.

In terms of biological role, involved in transcription antitermination. Required for transcription of ribosomal RNA (rRNA) genes. Binds specifically to the boxA antiterminator sequence of the ribosomal RNA (rrn) operons. The polypeptide is Transcription antitermination protein NusB (Thermotoga sp. (strain RQ2)).